The sequence spans 142 residues: FAD synthase (142 aa).

Residues 9 to 10 (TF), 14 to 17 (HPGH), and Asp92 each bind ATP.

It belongs to the archaeal FAD synthase family. As to quaternary structure, homodimer. Requires a divalent metal cation as cofactor.

The enzyme catalyses FMN + ATP + H(+) = FAD + diphosphate. It participates in cofactor biosynthesis; FAD biosynthesis; FAD from FMN: step 1/1. Its function is as follows. Catalyzes the transfer of the AMP portion of ATP to flavin mononucleotide (FMN) to produce flavin adenine dinucleotide (FAD) coenzyme. The polypeptide is FAD synthase (Haloferax volcanii (strain ATCC 29605 / DSM 3757 / JCM 8879 / NBRC 14742 / NCIMB 2012 / VKM B-1768 / DS2) (Halobacterium volcanii)).